Here is a 299-residue protein sequence, read N- to C-terminus: Protoheme IX farnesyltransferase (299 aa).

9 helical membrane-spanning segments follow: residues 25–45 (VVVL…RAGV), 47–67 (WTVL…AAAV), 95–115 (LAAL…LLTF), 119–139 (LAAW…TGFL), 147–167 (IVIG…AVSG), 173–193 (PLLL…ALAI), 218–238 (LHIL…YAIH), 243–263 (LYLL…WALY), and 279–299 (IRYL…PLTL).

Belongs to the UbiA prenyltransferase family. Protoheme IX farnesyltransferase subfamily.

Its subcellular location is the cell inner membrane. It catalyses the reaction heme b + (2E,6E)-farnesyl diphosphate + H2O = Fe(II)-heme o + diphosphate. The protein operates within porphyrin-containing compound metabolism; heme O biosynthesis; heme O from protoheme: step 1/1. Functionally, converts heme B (protoheme IX) to heme O by substitution of the vinyl group on carbon 2 of heme B porphyrin ring with a hydroxyethyl farnesyl side group. The protein is Protoheme IX farnesyltransferase of Azotobacter vinelandii (strain DJ / ATCC BAA-1303).